The following is a 199-amino-acid chain: MQFEVKDLINKIKKDGLEEAERASNDIILKAKREAEEIVARAEEAARVLKAKSEKEANDYKCHALEASRQAIRDLIIGVEKNLKSLFENALKDNVTEVLSDNNFLAELIIKITDSWAKGEKLVIQLNESDFSSLEQILRLKLGNKLKEGMELRPFRGISKGFKIQKKNIGLHYDFSAETIADILFDYLNPRFKEVIKVV.

Belongs to the V-ATPase E subunit family.

Functionally, produces ATP from ADP in the presence of a proton gradient across the membrane. This chain is V-type ATP synthase subunit E (atpE), found in Borreliella burgdorferi (strain ATCC 35210 / DSM 4680 / CIP 102532 / B31) (Borrelia burgdorferi).